A 72-amino-acid chain; its full sequence is MNNNNFDMEKFKKLAAIVSEGEIDEMLDETTVGAASTLPCAEVVVTVTGIIVKATTGFDWCPTGACTHSCRF.

The propeptide at 1–34 is cleaved by FlvT; that stretch reads MNNNNFDMEKFKKLAAIVSEGEIDEMLDETTVGA. Residues 36-40 constitute a cross-link (lanthionine (Ser-Cys); by FlvM2); that stretch reads STLPC. 2,3-didehydrobutyrine; by FlvM2 occurs at positions 37, 46, and 48. 3 cross-links (beta-methyllanthionine (Thr-Cys); by FlvM2) span residues 55–61, 63–66, and 67–70; these read TTGFDWC, TGAC, and THSC.

Post-translationally, contains LL-lanthionine and DL-beta-methyllanthionine, when coepressed in E.coli with the flavecin synthetase FlvM2.

It is found in the secreted. Its function is as follows. Lanthionine-containing peptide antibiotic (lantibiotic) that is probably weakly active on Gram-positive bacteria, since its analog [Del1]Flvbeta.g shows weak antibacterial activity against M.luteus. This activity is synergistically enhanced by [Del2]Flvalpha.a, an analog of Flvalpha.a, which is encoded by the same operon than Flvbeta.g. The bactericidal activity of lantibiotics is based on depolarization of energized bacterial cytoplasmic membranes, initiated by the formation of aqueous transmembrane pores. This chain is Lantibiotic Flvbeta.g, found in Ruminococcus flavefaciens.